The chain runs to 251 residues: Endonuclease NucS (251 aa).

Over residues 230–240 the composition is skewed to basic and acidic residues; the sequence is LEPPKKGNEKR. The interval 230-251 is disordered; sequence LEPPKKGNEKRSKQKTLDFFTP.

This sequence belongs to the NucS endonuclease family. Homodimer. Interacts with PCNA.

The protein localises to the cytoplasm. Its activity is regulated as follows. Activity is modulated by PCNA. PCNA increases the binding affinity of NucS towards ssDNA as well as branched DNA substrates carrying either 3' or 5' flaps. PCNA is also required for optimal loading of NucS on its substrates and to direct activity towards ss/dsDNA junction. Cleaves both 3' and 5' ssDNA extremities of branched DNA structures. Binds to ssDNA. The sequence is that of Endonuclease NucS from Pyrococcus abyssi (strain GE5 / Orsay).